The primary structure comprises 189 residues: MKTCNLTDRMKVKMIMLLFQILAISTLQSDSAYIPDRYTQENVAVRGKATQSALASGGGAVLSLPGYAIDGNRDSDSSHGSCSHTTNGPNPWWRVDLLQVYTIASVTITNRGDCCGERITGAHILIGNSLENNGINNPQCSTVGIMTAGETRTFHCSRPMIGRYVTVYLPKTEYLQLCEVEVNALLPAN.

The first 31 residues, 1-31, serve as a signal peptide directing secretion; it reads MKTCNLTDRMKVKMIMLLFQILAISTLQSDS. Positions 40-189 are F5/8 type C-like; it reads QENVAVRGKA…VEVNALLPAN (150 aa). Ca(2+) is bound by residues D70, N72, and S81. Intrachain disulfides connect C82/C178, C114/C115, and C140/C156. Positions 84 and 111 each coordinate alpha-L-fucose. The short motif at 111–113 is the Cell attachment site element; it reads RGD. R118 contributes to the alpha-L-fucose binding site. Residues C178 and E179 each contribute to the Ca(2+) site.

It belongs to the fucolectin family. In terms of assembly, homotrimer. As to expression, gill mucous cells.

Its subcellular location is the secreted. In terms of biological role, acts as a defensive agent. Recognizes blood group fucosylated oligosaccharides including A, B, H and Lewis B-type antigens. Does not recognize Lewis A antigen and has low affinity for monovalent haptens. The protein is Fucolectin-5 of Anguilla japonica (Japanese eel).